The primary structure comprises 317 residues: Melanocyte-stimulating hormone receptor (317 aa).

At 1–37 (MPAQGSQRSXLGSLNSTLMATPSLGLAANQSGPQCLE) the chain is on the extracellular side. N-linked (GlcNAc...) asparagine glycosylation is found at Asn15 and Asn29. Residues 38–63 (VSVPDGLFLCLGLVSLVENMLVVAAI) form a helical membrane-spanning segment. At 64-72 (AKNRNLHSP) the chain is on the cytoplasmic side. Residues 73-93 (MYCFICCLALSDLLVSISNVL) traverse the membrane as a helical segment. At 94 to 118 (ETAVMLLLEAGALAVGATVVQQLDN) the chain is on the extracellular side. A helical membrane pass occupies residues 119-140 (VIDVLICSSMVSSLCFLGAIAM). Residues 141 to 163 (DRYISIFYALRYHSIVTLSRAQW) lie on the Cytoplasmic side of the membrane. A helical membrane pass occupies residues 164–183 (ATAAVWAASILSSTLFIAYY). At 184–191 (DRTVVLLC) the chain is on the extracellular side. A helical membrane pass occupies residues 192 to 211 (LVVFFLAMLVLMAVLYAHML). At 212-240 (TQACQHVQGITRLHKRQHLVQQGFGLKGA) the chain is on the cytoplasmic side. A helical membrane pass occupies residues 241 to 266 (ATLTILLGVFLLCWGPFFLHLTLIAV). At 267-279 (CPQHPTCSCVFKN) the chain is on the extracellular side. Residues 280–300 (FKLFLALIICNAIVDPLIYAF) form a helical membrane-spanning segment. Topologically, residues 301-317 (RSQELRKTLKEVLLFSW) are cytoplasmic.

Belongs to the G-protein coupled receptor 1 family. In terms of assembly, interacts with MGRN1, but does not undergo MGRN1-mediated ubiquitination; this interaction competes with GNAS-binding and thus inhibits agonist-induced cAMP production. Interacts with OPN3; the interaction results in a decrease in MC1R-mediated cAMP signaling and ultimately a decrease in melanin production in melanocytes.

It is found in the cell membrane. Receptor for MSH (alpha, beta and gamma) and ACTH. The activity of this receptor is mediated by G proteins which activate adenylate cyclase. Mediates melanogenesis, the production of eumelanin (black/brown) and phaeomelanin (red/yellow), via regulation of cAMP signaling in melanocytes. This is Melanocyte-stimulating hormone receptor (MC1R) from Galago senegalensis (Northern lesser bushbaby).